The following is a 66-amino-acid chain: DNA gyrase inhibitor YacG (66 aa).

Positions 9, 12, 28, and 32 each coordinate Zn(2+). Residues 45–66 (HKIAGSEGSEDELYSGDLEPRH) are disordered.

It belongs to the DNA gyrase inhibitor YacG family. As to quaternary structure, interacts with GyrB. Requires Zn(2+) as cofactor.

Inhibits all the catalytic activities of DNA gyrase by preventing its interaction with DNA. Acts by binding directly to the C-terminal domain of GyrB, which probably disrupts DNA binding by the gyrase. The protein is DNA gyrase inhibitor YacG of Pseudomonas putida (strain ATCC 700007 / DSM 6899 / JCM 31910 / BCRC 17059 / LMG 24140 / F1).